The chain runs to 487 residues: MSETLTPSAGAANNVVGRVTQVRGPVVDVQFEGDLPFILNALHVQNGDHTLVLEVAQEIGERQVRCIAMDTTDGLVRGTEVRDTGKQIMVPVGPATLGRILNVVGEPIDERGPISSELRFPIHRPAPSFEEQAAASEILVTGIKVVDLLCPYLKGGKIGLFGGAGVGKTVIIQELINNIAKAHGGVSVFAGVGERTREGNDLYFEMQDAGVIKIAEDGSTEGSKVALVYGQMNEPPGARSRVALTGLSLAEYFRDEEGQDVLFFVDNIFRFTQAGSEVSALLGRIPSAVGYQPTLATEMGALQERITSTKKGSITSVQAVYVPADDLTDPAPAATFAHLDATTVLNRSIAEMGIYPAVDPLDSTSRSLDPKIVGEEHYQVARQVQQTLQTYKGLQDIIAILGMDELSEDDKKIVGRARRIQRFLSQPFHVAEVFTGAPGKLVSLEDTIRSFKAVVAGEYDHLPEGAFYMVGDIDEAIAKAEKMKQEA.

An ATP-binding site is contributed by 162–169 (GGAGVGKT).

It belongs to the ATPase alpha/beta chains family. F-type ATPases have 2 components, CF(1) - the catalytic core - and CF(0) - the membrane proton channel. CF(1) has five subunits: alpha(3), beta(3), gamma(1), delta(1), epsilon(1). CF(0) has three main subunits: a(1), b(2) and c(9-12). The alpha and beta chains form an alternating ring which encloses part of the gamma chain. CF(1) is attached to CF(0) by a central stalk formed by the gamma and epsilon chains, while a peripheral stalk is formed by the delta and b chains.

It localises to the cell inner membrane. The catalysed reaction is ATP + H2O + 4 H(+)(in) = ADP + phosphate + 5 H(+)(out). Its function is as follows. Produces ATP from ADP in the presence of a proton gradient across the membrane. The catalytic sites are hosted primarily by the beta subunits. This Gluconobacter oxydans (strain 621H) (Gluconobacter suboxydans) protein is ATP synthase subunit beta 1.